The following is a 471-amino-acid chain: UDP-N-acetylmuramate--L-alanine ligase (471 aa).

114 to 120 (GTHGKTT) is an ATP binding site.

Belongs to the MurCDEF family.

Its subcellular location is the cytoplasm. It carries out the reaction UDP-N-acetyl-alpha-D-muramate + L-alanine + ATP = UDP-N-acetyl-alpha-D-muramoyl-L-alanine + ADP + phosphate + H(+). It functions in the pathway cell wall biogenesis; peptidoglycan biosynthesis. Its function is as follows. Cell wall formation. This chain is UDP-N-acetylmuramate--L-alanine ligase, found in Agrobacterium fabrum (strain C58 / ATCC 33970) (Agrobacterium tumefaciens (strain C58)).